A 433-amino-acid polypeptide reads, in one-letter code: Serine hydroxymethyltransferase (433 aa).

122 to 124 (AHV) provides a ligand contact to (6S)-5,6,7,8-tetrahydrofolate. At Lys228 the chain carries N6-(pyridoxal phosphate)lysine.

It belongs to the SHMT family. In terms of assembly, homodimer. The cofactor is pyridoxal 5'-phosphate.

The protein resides in the cytoplasm. Its pathway is amino-acid biosynthesis; glycine biosynthesis; glycine from L-serine: step 1/1. In terms of biological role, catalyzes the reversible interconversion of serine and glycine with a modified folate serving as the one-carbon carrier. Also exhibits a pteridine-independent aldolase activity toward beta-hydroxyamino acids, producing glycine and aldehydes, via a retro-aldol mechanism. The sequence is that of Serine hydroxymethyltransferase from Sulfolobus acidocaldarius (strain ATCC 33909 / DSM 639 / JCM 8929 / NBRC 15157 / NCIMB 11770).